The chain runs to 151 residues: Small ribosomal subunit protein uS15y (151 aa).

It belongs to the universal ribosomal protein uS15 family.

The chain is Small ribosomal subunit protein uS15y (RPS13B) from Arabidopsis thaliana (Mouse-ear cress).